The sequence spans 134 residues: Small ribosomal subunit protein uS11 (134 aa).

The protein belongs to the universal ribosomal protein uS11 family. Part of the 30S ribosomal subunit. Interacts with proteins S7 and S18. Binds to IF-3.

Its function is as follows. Located on the platform of the 30S subunit, it bridges several disparate RNA helices of the 16S rRNA. Forms part of the Shine-Dalgarno cleft in the 70S ribosome. The chain is Small ribosomal subunit protein uS11 from Janthinobacterium sp. (strain Marseille) (Minibacterium massiliensis).